An 823-amino-acid chain; its full sequence is MDNTYNPQEVEEQAQQYWHKKQSFNVTEDLNKEKFYCLSMFPYPSGTLHMGHVRNYTLGDVIARYQRALGKNVLQPIGWDAFGLPAENAAIKNKIPPAEWTRKNIAAMKEQFLRLGNAYDWKREITTCDPEYYRWEQWFFIRLFEKGLVYKKNAVVNWDPVDQTVLANEQVVDGRGWRSGALVERKEISQWFIKITSYADELLSSLDSLDEWPAQVKQMQRNWIGKSIGTEIYFNVNNYPKRLKIYTTRPDTLMGATYLAVATDHPLAKEAASNNKKVQEFLDSCQGIKIAEAELATMEKRGIDTGMTAIHPITGKELPIWVANFVLMQYGSGAVMAVPAHDQRDWEFAQKYQLPVKQVIKPIDIEHDFNQSAYTEEGILINSNQFDNLLSSKAIQVITNFLEENDAGKATINYRLRDWGVSRQRYWGTPIPMIICEQCGIVPVPDEELPVVLPENVDFTGTGSPLTQCKEFVNVTCPKCGQDANRETDTFDTFVESSWYYARFACKGQENAMLDDRAKYWTPVDQYIGGIEHAVMHLLYARFFHKLMRDEGLVNSDEPFKALLTQGMVLKDGHKMSKSLGNVVDPNHLINTYGADTARLFVMFASPPEQSLEWSDSGVEGAHRFLKRVWAFSHQHRDMLIDINDSILSGNGHVDWKEAESRLKKSRHIVHQILAQATHDYDRNQFNTVVSGCMKLFNEISDYSIETENDKFFIHSSISILLRLLAPITPHICHCLWQQLGFDKAIIDAPWPKVDKSALKTDEVDYVVQVNGKLRAQFTASTDASEEELIAAAKEHAHNFVVNHTIKKAIIVPHRQLINLVIG.

A 'HIGH' region motif is present at residues Pro42–His52. Residues Lys575 to Ser579 carry the 'KMSKS' region motif. ATP is bound at residue Lys578.

This sequence belongs to the class-I aminoacyl-tRNA synthetase family.

Its subcellular location is the cytoplasm. The catalysed reaction is tRNA(Leu) + L-leucine + ATP = L-leucyl-tRNA(Leu) + AMP + diphosphate. The sequence is that of Leucine--tRNA ligase from Legionella pneumophila (strain Paris).